The primary structure comprises 1048 residues: MKDMESIPGPKPLPVVGNLFDIDLENGLQSIIKMAHEFGPLFQITINGQKQIFATSQALVDELCDETRFHKAVMGGIQKLRMLAKDGLFTAYHGERGWGIAHRILMPAFGPLRIRDMFEDMSDVAQQLCFKWARQGSSTSINICDDFTRLTLDTIALCTMGFRLNSYYNSNALHPFIESMLYVLKEAELQSTLPGVANCMRVKAQRRMSKHIDAMRSMARNLIEERRAKPEPVDDLLNTLLNGRDPITGEGMSDDLIISNIITFLIAGHETTSGLLSFTFYYLLQNQDVLERARNEVDEVTGVGPITVQHLAKLPYIDAIMKESLRLMPTAPAFTVTPQKPEVLGGKWMINTGDSVNLLLPVCLRDETVFGPDAGEFRPNRMLEENFSKLPPNSWKPFGNGERGCIGRAFAWQEAQLVVALVLRTFDLAAEDPYYKLRIKETLTIKPDGFRIRATLRHGKSATALSQHNISVGAAASPASSTYLAGNENGRDAAGGQPVSFFYGSNSGTCKALTHRLASTMMTRGFTDQNIAPLDSAVDNLPRDQPTIIITTTYDGQPTDDAKKFVAWLESGNSPSLQGVSYAVFGCGHQDWTKTFYRIPILIDNLMYKAGATRLATRGAANAAISDLFSDLEVWEETNLLPGLRESFYPPNNSNFVPLEPHQLQISINKPTRVGMHRDLIEAKVTAIRTLTSPGAPEKRHLEFCIPGETTLRPGDHLNILPVNPPSTVSRALARFNLAPDHSITFESSNALDLPQATPVSAAELFSSYLELSQPATRNNLKELASTTPSDGEKQELLHLYDSYDSLIRAKRASVLDLLEQFTSVTLPITTFISMLPALRVRTYSLSMAPSFKPLHYSLTFSVINEPAWNGNGRYLGVASNYLASLNLGSILYISPRPAKDAFHLPTDQSSKPIIMICAGSGLAPFRSFIQDRMLWQQQDKTLAKALLFFGCRSPQLDDLYHDELSQFEAAGVVEVRRAYSKVPNHYLAKGCRYVQHRLLTETETIQDMWAQDAIIYVCGSGNLAKGVKAVLESMLGTLYERYITEIF.

Heme is bound at residue cysteine 405. Residues 499–640 (VSFFYGSNSG…DLEVWEETNL (142 aa)) form the Flavodoxin-like domain. FMN is bound by residues 505–509 (SNSGT) and 584–616 (VFGCGHQDWTKTFYRIPILIDNLMYKAGATRLA). The 229-residue stretch at 678-906 (RDLIEAKVTA…RPAKDAFHLP (229 aa)) folds into the FAD-binding FR-type domain.

The protein in the N-terminal section; belongs to the cytochrome P450 family. It depends on FAD as a cofactor. FMN is required as a cofactor. Requires heme as cofactor.

The enzyme catalyses 2 oxidized [cytochrome P450] + NADPH = 2 reduced [cytochrome P450] + NADP(+) + H(+). It catalyses the reaction an organic molecule + reduced [NADPH--hemoprotein reductase] + O2 = an alcohol + oxidized [NADPH--hemoprotein reductase] + H2O + H(+). The catalysed reaction is dodecanoate + reduced [NADPH--hemoprotein reductase] + O2 = 5-hydroxydodecanoate + oxidized [NADPH--hemoprotein reductase] + H2O + H(+). It carries out the reaction tetradecanoate + reduced [NADPH--hemoprotein reductase] + O2 = 7-hydroxytetradecanoate + oxidized [NADPH--hemoprotein reductase] + H2O + H(+). The enzyme catalyses dodecan-1-ol + reduced [NADPH--hemoprotein reductase] + O2 = 1,5-dodecanediol + oxidized [NADPH--hemoprotein reductase] + H2O + H(+). It catalyses the reaction dodecan-1-ol + reduced [NADPH--hemoprotein reductase] + O2 = 1,4-dodecanediol + oxidized [NADPH--hemoprotein reductase] + H2O + H(+). The catalysed reaction is dodecan-1-ol + reduced [NADPH--hemoprotein reductase] + O2 = 1,6-dodecanediol + oxidized [NADPH--hemoprotein reductase] + H2O + H(+). Self-sufficient cytochrome P450 monooxygenase that catalyzes the regioselective in-chain hydroxylation of alkanes, fatty alcohols, and fatty acids at the omega-7 position. Performs hydroxylation of C10-C16 n-alkanes and C12 and C14 fatty alcohols; and thereby enables the one step biocatalytic synthesis of rare alcohols such as 5-dodecanol and 7-tetradecanol. Converts 1-dodecanol into 1,5-dodecanediol as major product with very little sub-terminally hydroxylated products with the 1,4-dodecanediol and 1,6-dodecanediol more abundant. Converts dodecanoic acid to 5-hydroxydodecanoic acid which can be further converted into delta-dodecalactone by lactonization of the 5-hydroxy acid at low pH. Also gives sub-terminal hydroxylation of dodecanoic acid with 9-hydroxydodecanoic acid being the second most abundant product. The protein is Self-sufficient cytochrome P450 monooxygenase CYP505E4 of Penicillium expansum (Blue mold rot fungus).